Here is a 320-residue protein sequence, read N- to C-terminus: Sliding-clamp-loader large subunit (320 aa).

ATP contacts are provided by residues 12-15 (EQKY), Ile-24, 53-58 (GTGKTT), and Arg-205.

The protein belongs to the Tevenvirinae sliding-clamp-loader large subunit family. As to quaternary structure, the sliding-clamp-loader consists of 4 large subunits and 1 small subunit. Interacts with the sliding clamp; this interaction allows the sliding-clamp-loader to open the sliding clamp. Part of the replicase complex that includes the DNA polymerase, the polymerase clamp, the clamp loader complex, the single-stranded DNA binding protein, the primase, the helicase and the helicase assembly factor.

In terms of biological role, forms the sliding-clamp-loader together with the small subunit. Functions as an ATPase enzyme. The clamp loader holds the clamp in an open conformation and places it onto the DNA. 4 ATP molecules must bind to the sliding-clamp-loader before the latter can open the sliding clamp. ATP hydrolysis triggers the detachment of the sliding clamp from the sliding-clamp-loader, freeing the sliding clamp to track along DNA. This chain is Sliding-clamp-loader large subunit (44), found in Escherichia phage RB69 (Bacteriophage RB69).